We begin with the raw amino-acid sequence, 377 residues long: Chaperone protein DnaJ (377 aa).

The region spanning 5 to 70 is the J domain; it reads DFYEVLGVER…SKRAAYDQYG (66 aa). A CR-type zinc finger spans residues 136–214; it reads GTTVTIRVPT…CHGQGRVEEQ (79 aa). C149, C152, C166, C169, C188, C191, C202, and C205 together coordinate Zn(2+). 4 CXXCXGXG motif repeats span residues 149 to 156, 166 to 173, 188 to 195, and 202 to 209; these read CKTCNGSG, CTTCGGIG, CPRCHGTG, and CGSCHGQG.

The protein belongs to the DnaJ family. In terms of assembly, homodimer. Requires Zn(2+) as cofactor.

The protein localises to the cytoplasm. Its function is as follows. Participates actively in the response to hyperosmotic and heat shock by preventing the aggregation of stress-denatured proteins and by disaggregating proteins, also in an autonomous, DnaK-independent fashion. Unfolded proteins bind initially to DnaJ; upon interaction with the DnaJ-bound protein, DnaK hydrolyzes its bound ATP, resulting in the formation of a stable complex. GrpE releases ADP from DnaK; ATP binding to DnaK triggers the release of the substrate protein, thus completing the reaction cycle. Several rounds of ATP-dependent interactions between DnaJ, DnaK and GrpE are required for fully efficient folding. Also involved, together with DnaK and GrpE, in the DNA replication of plasmids through activation of initiation proteins. This Pseudomonas paraeruginosa (strain DSM 24068 / PA7) (Pseudomonas aeruginosa (strain PA7)) protein is Chaperone protein DnaJ.